Here is a 459-residue protein sequence, read N- to C-terminus: Cell division protein FtsZ (459 aa).

GTP contacts are provided by residues 25–29 (GAGSN), 112–114 (GTG), E143, R147, and D191. 2 disordered regions span residues 383 to 405 (DQAP…DAGE) and 427 to 459 (IPER…KKRD).

It belongs to the FtsZ family. Homodimer. Polymerizes to form a dynamic ring structure in a strictly GTP-dependent manner. Interacts directly with several other division proteins.

It is found in the cytoplasm. In terms of biological role, essential cell division protein that forms a contractile ring structure (Z ring) at the future cell division site. The regulation of the ring assembly controls the timing and the location of cell division. One of the functions of the FtsZ ring is to recruit other cell division proteins to the septum to produce a new cell wall between the dividing cells. Binds GTP and shows GTPase activity. This Rickettsia bellii (strain RML369-C) protein is Cell division protein FtsZ.